The following is a 421-amino-acid chain: Putative transporter AmpG 3 (421 aa).

Helical transmembrane passes span 6–26, 41–61, 80–100, 104–124, 139–159, 166–186, 230–250, 274–294, 297–317, 324–344, 360–380, and 388–408; these read YLIG…LIFF, IIGA…WSPF, WALV…KRSP, LCIT…QDIV, LSIV…LGSV, IIFG…VGPI, LLLI…PMAM, LLIM…IGIF, VLIG…LATI, FIIT…IISI, AISA…GGIC, and VFFL…YTIY.

This sequence belongs to the major facilitator superfamily.

It localises to the cell inner membrane. This Rickettsia prowazekii (strain Madrid E) protein is Putative transporter AmpG 3 (ampG3).